Here is a 540-residue protein sequence, read N- to C-terminus: Chaperonin GroEL (540 aa).

ATP contacts are provided by residues 29 to 32 (TLGP), 86 to 90 (DGTTT), glycine 413, 476 to 478 (NAA), and aspartate 492.

This sequence belongs to the chaperonin (HSP60) family. Forms a cylinder of 14 subunits composed of two heptameric rings stacked back-to-back. Interacts with the co-chaperonin GroES.

Its subcellular location is the cytoplasm. It catalyses the reaction ATP + H2O + a folded polypeptide = ADP + phosphate + an unfolded polypeptide.. In terms of biological role, together with its co-chaperonin GroES, plays an essential role in assisting protein folding. The GroEL-GroES system forms a nano-cage that allows encapsulation of the non-native substrate proteins and provides a physical environment optimized to promote and accelerate protein folding. This Streptococcus anginosus protein is Chaperonin GroEL.